We begin with the raw amino-acid sequence, 284 residues long: Ribosomal RNA small subunit methyltransferase A (284 aa).

6 residues coordinate S-adenosyl-L-methionine: asparagine 28, leucine 30, glycine 55, glutamate 77, aspartate 103, and asparagine 123.

It belongs to the class I-like SAM-binding methyltransferase superfamily. rRNA adenine N(6)-methyltransferase family. RsmA subfamily.

The protein resides in the cytoplasm. The catalysed reaction is adenosine(1518)/adenosine(1519) in 16S rRNA + 4 S-adenosyl-L-methionine = N(6)-dimethyladenosine(1518)/N(6)-dimethyladenosine(1519) in 16S rRNA + 4 S-adenosyl-L-homocysteine + 4 H(+). In terms of biological role, specifically dimethylates two adjacent adenosines (A1518 and A1519) in the loop of a conserved hairpin near the 3'-end of 16S rRNA in the 30S particle. May play a critical role in biogenesis of 30S subunits. The chain is Ribosomal RNA small subunit methyltransferase A from Bradyrhizobium diazoefficiens (strain JCM 10833 / BCRC 13528 / IAM 13628 / NBRC 14792 / USDA 110).